The primary structure comprises 555 residues: CTP synthase (555 aa).

Residues 1–271 (MVKRGKKTKY…DDKLAELFNI (271 aa)) are amidoligase domain. Ser19 serves as a coordination point for CTP. UTP is bound at residue Ser19. ATP is bound by residues 20–25 (SLGKGL) and Asp77. The Mg(2+) site is built by Asp77 and Glu145. Residues 152-154 (DIE), 192-197 (KTKPTQ), and Lys228 each bind CTP. UTP-binding positions include 192–197 (KTKPTQ) and Lys228. Residues 297 to 537 (RIGIVGKYVE…VKAALEHRDA (241 aa)) enclose the Glutamine amidotransferase type-1 domain. An L-glutamine-binding site is contributed by Gly358. Cys385 functions as the Nucleophile; for glutamine hydrolysis in the catalytic mechanism. Residues 386 to 389 (LGLQ), Glu409, and Arg466 each bind L-glutamine. Residues His510 and Glu512 contribute to the active site. Residues 535–555 (RDAQQRQPPAEVKKLAVGKNG) form a disordered region.

This sequence belongs to the CTP synthase family. Homotetramer.

It carries out the reaction UTP + L-glutamine + ATP + H2O = CTP + L-glutamate + ADP + phosphate + 2 H(+). The catalysed reaction is L-glutamine + H2O = L-glutamate + NH4(+). The enzyme catalyses UTP + NH4(+) + ATP = CTP + ADP + phosphate + 2 H(+). It functions in the pathway pyrimidine metabolism; CTP biosynthesis via de novo pathway; CTP from UDP: step 2/2. Its activity is regulated as follows. Allosterically activated by GTP, when glutamine is the substrate; GTP has no effect on the reaction when ammonia is the substrate. The allosteric effector GTP functions by stabilizing the protein conformation that binds the tetrahedral intermediate(s) formed during glutamine hydrolysis. Inhibited by the product CTP, via allosteric rather than competitive inhibition. Catalyzes the ATP-dependent amination of UTP to CTP with either L-glutamine or ammonia as the source of nitrogen. Regulates intracellular CTP levels through interactions with the four ribonucleotide triphosphates. The sequence is that of CTP synthase from Anaeromyxobacter dehalogenans (strain 2CP-1 / ATCC BAA-258).